The sequence spans 173 residues: 3-hydroxydecanoyl-[acyl-carrier-protein] dehydratase (173 aa).

His71 is a catalytic residue.

It belongs to the thioester dehydratase family. FabA subfamily. Homodimer.

The protein localises to the cytoplasm. The catalysed reaction is a (3R)-hydroxyacyl-[ACP] = a (2E)-enoyl-[ACP] + H2O. The enzyme catalyses (3R)-hydroxydecanoyl-[ACP] = (2E)-decenoyl-[ACP] + H2O. It catalyses the reaction (2E)-decenoyl-[ACP] = (3Z)-decenoyl-[ACP]. It functions in the pathway lipid metabolism; fatty acid biosynthesis. In terms of biological role, necessary for the introduction of cis unsaturation into fatty acids. Catalyzes the dehydration of (3R)-3-hydroxydecanoyl-ACP to E-(2)-decenoyl-ACP and then its isomerization to Z-(3)-decenoyl-ACP. Can catalyze the dehydratase reaction for beta-hydroxyacyl-ACPs with saturated chain lengths up to 16:0, being most active on intermediate chain length. This chain is 3-hydroxydecanoyl-[acyl-carrier-protein] dehydratase, found in Baumannia cicadellinicola subsp. Homalodisca coagulata.